Consider the following 526-residue polypeptide: MVVALSFPEADPALSSPDAPELHQDEAQVVEELTVNGKHSLSWESPQGPGCGLQNTGNSCYLNAALQCLTHTPPLADYMLSQEHSQTCCSPEGCKLCAMEALVTQSLLHSHSGDVMKPSHILTSAFHKHQQEDAHEFLMFTLETMHESCLQVHRQSKPTSEDSSPIHDIFGGWWRSQIKCLLCQGTSDTYDRFLDIPLDISSAQSVKQALWDTEKSEELCGDNAYYCGKCRQKMPASKTLHVHIAPKVLMVVLNRFSAFTGNKLDRKVSYPEFLDLKPYLSEPTGGPLPYALYAVLVHDGATSHSGHYFCCVKAGHGKWYKMDDTKVTRCDVTSVLNENAYVLFYVQQANLKQVSIDMPEGRINEVLDPEYQLKKSRRKKHKKKSPFTEDLGEPCENRDKRAIKETSLGKGKVLQEVNHKKAGQKHGNTKLMPQKQNHQKAGQNLRNTEVELDLPADAIVIHQPRSTANWGRDSPDKENQPLHNADRLLTSQGPVNTWQLCRQEGRRRSKKGQNKNKQGQRLLLVC.

The segment at 1–21 is disordered; the sequence is MVVALSFPEADPALSSPDAPE. The USP domain maps to 51–348; the sequence is CGLQNTGNSC…NAYVLFYVQQ (298 aa). C60 serves as the catalytic Nucleophile. H307 acts as the Proton acceptor in catalysis. Residues 374–385 are compositionally biased toward basic residues; that stretch reads KKSRRKKHKKKS. 2 disordered regions span residues 374 to 394 and 465 to 494; these read KKSR…LGEP and RSTA…SQGP. A compositionally biased stretch (basic and acidic residues) spans 473–486; sequence DSPDKENQPLHNAD.

Belongs to the peptidase C19 family. Polyubiquitinated; ubiquitination leads to its subsequent degradation. As to expression, expressed in hematopoietic progenitor cell lines Ba/F3 and FDCP1. Not detected in brain, lung, liver, kidney, thymus, spleen and bone marrow.

The enzyme catalyses Thiol-dependent hydrolysis of ester, thioester, amide, peptide and isopeptide bonds formed by the C-terminal Gly of ubiquitin (a 76-residue protein attached to proteins as an intracellular targeting signal).. Functionally, deubiquitinating enzyme that removes conjugated ubiquitin from specific proteins to regulate different cellular processes. Has deubiquitinating enzyme activity for DNAH5, suggesting a role in the regulation of DNAH5 degradation by the ubiquitin-proteasome pathway. Has growth-suppressing activity; induces arrest in G1 phase upon controlled expression. This is Ubiquitin carboxyl-terminal hydrolase 17-like protein A (Usp17la) from Mus musculus (Mouse).